A 173-amino-acid chain; its full sequence is Secreted RxLR effector protein RXLR-C12 (173 aa).

A signal peptide spans 1 to 18 (MLQFATAFLAISANVVMT). The short motif at 41–55 (RRLRTHEIGTVPEER) is the RxLR-dEER element. A glycan (N-linked (GlcNAc...) asparagine) is linked at N155.

This sequence belongs to the RxLR effector family.

It localises to the secreted. The protein resides in the host cytoplasm. The protein localises to the host nucleus. Secreted effector that suppresses pattern-triggered immunity (PTI) in plant host. The chain is Secreted RxLR effector protein RXLR-C12 from Plasmopara halstedii (Downy mildew of sunflower).